The primary structure comprises 790 residues: Polyribonucleotide nucleotidyltransferase (790 aa).

Mg(2+) is bound by residues Asp-498 and Asp-504. The 60-residue stretch at 565–624 folds into the KH domain; that stretch reads PRILRIKIKPEQIGEVIGPGGRVIRAIQEQTGTKISIEEDGTVFISAANEDAARRAVREI. The S1 motif domain maps to 634-702; that stretch reads GEIFYGRVVT…PDGKINLSRK (69 aa). The tract at residues 710 to 790 is disordered; that stretch reads AERAATAQAP…KELLGEDEPN (81 aa). The span at 739–755 shows a compositional bias: basic and acidic residues; sequence PERRPGPPTPRRPEQRG. The span at 757–772 shows a compositional bias: pro residues; that stretch reads SRPPRPQAQRSTPPPG.

It belongs to the polyribonucleotide nucleotidyltransferase family. Mg(2+) is required as a cofactor.

It is found in the cytoplasm. It carries out the reaction RNA(n+1) + phosphate = RNA(n) + a ribonucleoside 5'-diphosphate. Its function is as follows. Involved in mRNA degradation. Catalyzes the phosphorolysis of single-stranded polyribonucleotides processively in the 3'- to 5'-direction. The chain is Polyribonucleotide nucleotidyltransferase from Thermomicrobium roseum (strain ATCC 27502 / DSM 5159 / P-2).